The primary structure comprises 347 residues: Queuosine 5'-phosphate N-glycosylase/hydrolase (347 aa).

Queuine-binding residues include histidine 53, phenylalanine 237, aspartate 239, aspartate 321, and aspartate 326. Residue aspartate 239 is the Nucleophile or transition state stabilizer of the active site.

This sequence belongs to the QNG1 protein family.

It catalyses the reaction queuosine 5'-phosphate + H2O = queuine + D-ribose 5-phosphate. In terms of biological role, catalyzes the hydrolysis of queuosine 5'-phosphate, releasing the nucleobase queuine (q). Is required for salvage of queuine from exogenous queuosine (Q) that is imported and then converted to queuosine 5'-phosphate intracellularly. This chain is Queuosine 5'-phosphate N-glycosylase/hydrolase, found in Nematostella vectensis (Starlet sea anemone).